Consider the following 313-residue polypeptide: Porphobilinogen deaminase (313 aa).

At Cys-242 the chain carries S-(dipyrrolylmethanemethyl)cysteine.

This sequence belongs to the HMBS family. Monomer. Dipyrromethane is required as a cofactor.

It carries out the reaction 4 porphobilinogen + H2O = hydroxymethylbilane + 4 NH4(+). It participates in porphyrin-containing compound metabolism; protoporphyrin-IX biosynthesis; coproporphyrinogen-III from 5-aminolevulinate: step 2/4. In terms of biological role, tetrapolymerization of the monopyrrole PBG into the hydroxymethylbilane pre-uroporphyrinogen in several discrete steps. The polypeptide is Porphobilinogen deaminase (Yersinia pseudotuberculosis serotype O:3 (strain YPIII)).